The primary structure comprises 549 residues: Adhesion G protein-coupled receptor G3 (549 aa).

The signal sequence occupies residues 1–20; it reads MATPRGLGALLLLLLLPTSG. Residues 21 to 270 are Extracellular-facing; it reads QEKPTEGPRN…DQSTVHILTR (250 aa). N-linked (GlcNAc...) asparagine glycans are attached at residues N98, N144, and N210. The 156-residue stretch at 107-262 folds into the GAIN-B domain; it reads FYFSLEPSQV…ALLLRPTLDQ (156 aa). 2 disulfide bridges follow: C215–C244 and C233–C246. The interval 215-262 is GPS; that stretch reads CVFWDVTKGTTGDWSSEGCSTEVRPEGTVCCCDHLTFFALLLRPTLDQ. A stachel region spans residues 251-259; it reads FFALLLRPT. The helical transmembrane segment at 271–295 threads the bilayer; sequence ISQAGCGVSMIFLAFTIILYAFLRL. Residues 296 to 304 lie on the Cytoplasmic side of the membrane; it reads SRERFKSED. The chain crosses the membrane as a helical span at residues 305–326; it reads APKIHVALGGSLFLLNLAFLVN. Residues 327-338 are Extracellular-facing; that stretch reads VGSGSKGSDAAC. Residues C338 and C420 are joined by a disulfide bond. Residues 339 to 364 traverse the membrane as a helical segment; that stretch reads WARGAVFHYFLLCAFTWMGLEAFHLY. At 365–378 the chain is on the cytoplasmic side; the sequence is LLAVRVFNTYFGHY. The helical transmembrane segment at 379-400 threads the bilayer; sequence FLKLSLVGWGLPALMVIGTGSA. The Extracellular segment spans residues 401 to 428; it reads NSYGLYTIRDRENRTSLELCWFREGTTM. Residue N413 is glycosylated (N-linked (GlcNAc...) asparagine). A helical transmembrane segment spans residues 429–454; sequence YALYITVHGYFLITFLFGMVVLALVV. Residues 455–474 are Cytoplasmic-facing; the sequence is WKIFTLSRATAVKERGKNRK. A helical membrane pass occupies residues 475–495; the sequence is KVLTLLGLSSLVGVTWGLAIF. At 496 to 501 the chain is on the extracellular side; it reads TPLGLS. A helical membrane pass occupies residues 502-525; sequence TVYIFALFNSLQGVFICCWFTILY. N510 contacts cortisol. The Cytoplasmic portion of the chain corresponds to 526 to 549; the sequence is LPSQSTTVSSSTARLDQAHSASQE.

The protein belongs to the G-protein coupled receptor 2 family. Adhesion G-protein coupled receptor (ADGR) subfamily. As to quaternary structure, heterodimer of 2 chains generated by proteolytic processing; the large extracellular N-terminal fragment and the membrane-bound C-terminal fragment predominantly remain associated and non-covalently linked. Interacts with PRTN3; this interaction induces the activation of PAR2. Interacts with GNAO1 (when palmitoylated). Post-translationally, autoproteolytically processed at the GPS region of the GAIN-B domain; this cleavage modulates receptor activity. In terms of processing, O- and N-glycosylated. In terms of tissue distribution, expressed in cultured primary dermal lymphatic endothelial cells. Highly expressed in polymorphonuclear cells (PMNs) including neutrophilic, eosinophilic, and basophilic granulocytes.

The protein resides in the cell membrane. Forms a heterodimer of 2 chains generated by proteolytic processing that remain associated through non-covalent interactions mediated by the GAIN-B domain. In the inactivated receptor, the Stachel sequence (also named stalk) is embedded in the GAIN-B domain, where it adopts a beta-strand conformation. On activation, the Stachel moves into the 7 transmembrane region and adopts a twisted hook-shaped configuration that forms contacts within the receptor, leading to coupling of a G-alpha protein, which activates signaling. The cleaved GAIN-B and N-terminal domains can then dissociate from the rest of the receptor. In terms of biological role, adhesion G-protein coupled receptor (aGPCR) for glucocorticoid hormones such as cortisol, cortisone and 11-deoxycortisol. Ligand binding causes a conformation change that triggers signaling via guanine nucleotide-binding proteins (G proteins) and modulates the activity of downstream effectors, such as adenylate cyclase. ADGRG3/GPR97 is coupled to G(o)/GNAO1 G proteins and mediates signaling by inhibiting adenylate cyclase activity. May also signal through G-alpha(q)-proteins; additional evidence are however required to confirm this result in vivo. Plays a role in the regulation of various processes including B-cell development, inflammation or innate immunity. Regulates migration of lymphatic endothelial cells in vitro via the small GTPases RhoA and CDC42. Antibody ligation leads to the production and activation of antimicrobial mediators like reactive oxygen species (ROS) and myeloperoxidase (MPO) as well as enhanced bacteria uptake and killing by granulocytes. Additionally, collaborates with protease-activated receptor 2/PAR2 to stimulate neutrophil-driven antimicrobial responses and endothelial cell activation. The polypeptide is Adhesion G protein-coupled receptor G3 (Homo sapiens (Human)).